A 1342-amino-acid polypeptide reads, in one-letter code: DNA-directed RNA polymerase subunit beta (1342 aa).

This sequence belongs to the RNA polymerase beta chain family. The RNAP catalytic core consists of 2 alpha, 1 beta, 1 beta' and 1 omega subunit. When a sigma factor is associated with the core the holoenzyme is formed, which can initiate transcription.

The catalysed reaction is RNA(n) + a ribonucleoside 5'-triphosphate = RNA(n+1) + diphosphate. DNA-dependent RNA polymerase catalyzes the transcription of DNA into RNA using the four ribonucleoside triphosphates as substrates. This is DNA-directed RNA polymerase subunit beta from Sodalis glossinidius (strain morsitans).